The following is a 131-amino-acid chain: Small ribosomal subunit protein uS11 (131 aa).

Belongs to the universal ribosomal protein uS11 family. As to quaternary structure, part of the 30S ribosomal subunit. Interacts with proteins S7 and S18. Binds to IF-3.

Its function is as follows. Located on the platform of the 30S subunit, it bridges several disparate RNA helices of the 16S rRNA. Forms part of the Shine-Dalgarno cleft in the 70S ribosome. The sequence is that of Small ribosomal subunit protein uS11 from Helicobacter pylori (strain G27).